Consider the following 607-residue polypeptide: Proteasome-associated ATPase (607 aa).

Positions 1 to 17 (MTESDRHDTPKGDRRIS) are enriched in basic and acidic residues. The segment at 1-65 (MTESDRHDTP…GRPAADNKEL (65 aa)) is disordered. A coiled-coil region spans residues 59–102 (AADNKELQERVDNLTARNAKLLDTLKDARQQLVALREEVDRLGQ). 294 to 299 (GCGKTL) provides a ligand contact to ATP. The docks into pockets in the proteasome alpha-ring stretch occupies residues 606–607 (YL).

Belongs to the AAA ATPase family. Homohexamer. Assembles into a hexameric ring structure that caps the 20S proteasome core. Strongly interacts with the prokaryotic ubiquitin-like protein Pup through a hydrophobic interface; the interacting region of ARC lies in its N-terminal coiled-coil domain. There is one Pup binding site per ARC hexamer ring. Upon ATP-binding, the C-terminus of ARC interacts with the alpha-rings of the proteasome core, possibly by binding to the intersubunit pockets.

It functions in the pathway protein degradation; proteasomal Pup-dependent pathway. In terms of biological role, ATPase which is responsible for recognizing, binding, unfolding and translocation of pupylated proteins into the bacterial 20S proteasome core particle. May be essential for opening the gate of the 20S proteasome via an interaction with its C-terminus, thereby allowing substrate entry and access to the site of proteolysis. Thus, the C-termini of the proteasomal ATPase may function like a 'key in a lock' to induce gate opening and therefore regulate proteolysis. This chain is Proteasome-associated ATPase, found in Gordonia bronchialis (strain ATCC 25592 / DSM 43247 / BCRC 13721 / JCM 3198 / KCTC 3076 / NBRC 16047 / NCTC 10667) (Rhodococcus bronchialis).